A 330-amino-acid chain; its full sequence is Aspartate--ammonia ligase (330 aa).

It belongs to the class-II aminoacyl-tRNA synthetase family. AsnA subfamily.

It is found in the cytoplasm. The catalysed reaction is L-aspartate + NH4(+) + ATP = L-asparagine + AMP + diphosphate + H(+). It functions in the pathway amino-acid biosynthesis; L-asparagine biosynthesis; L-asparagine from L-aspartate (ammonia route): step 1/1. This Escherichia coli O127:H6 (strain E2348/69 / EPEC) protein is Aspartate--ammonia ligase.